Consider the following 78-residue polypeptide: HssA/B-like protein 29 (78 aa).

Residues 1-31 (MTLFSSITSISKTNTSSKSSLNSFSGSSLSM) form a disordered region.

This sequence belongs to the hssA/B family.

The sequence is that of HssA/B-like protein 29 (hssl29) from Dictyostelium discoideum (Social amoeba).